The following is a 293-amino-acid chain: tRNA pseudouridine synthase B (293 aa).

Residue Asp-39 is the Nucleophile of the active site.

It belongs to the pseudouridine synthase TruB family. Type 1 subfamily.

The catalysed reaction is uridine(55) in tRNA = pseudouridine(55) in tRNA. Functionally, responsible for synthesis of pseudouridine from uracil-55 in the psi GC loop of transfer RNAs. This is tRNA pseudouridine synthase B from Streptococcus thermophilus (strain CNRZ 1066).